The following is a 136-amino-acid chain: MVPDAKHAPLPCPCGRPAYDRCCGRHVGTALPAPDAETLMRSRYSAFVLDRREHLLATWHASTRPAAIEPPPPGLRWLGLEVRQHRLTGPDAAEVEFVARSKLAGRAHRLHERSRFVRDQGRWFYLDGEIDPPVAG.

The protein belongs to the UPF0225 family.

The chain is UPF0225 protein Mpe_A2093 from Methylibium petroleiphilum (strain ATCC BAA-1232 / LMG 22953 / PM1).